Here is a 495-residue protein sequence, read N- to C-terminus: Germacrene A acid 8-beta-hydroxylase (495 aa).

Residues 3-23 (PFTTFSLVASSLILLICWALV) traverse the membrane as a helical; Signal-anchor for type II membrane protein segment. N-linked (GlcNAc...) asparagine glycosylation is present at asparagine 103. Cysteine 433 contributes to the heme binding site.

This sequence belongs to the cytochrome P450 family. Heme is required as a cofactor. In terms of tissue distribution, mostly expressed in leaves and flowers, and, to a lower extent, in roots and stems.

The protein localises to the membrane. The catalysed reaction is germacra-1(10),4,11(13)-trien-12-oate + reduced [NADPH--hemoprotein reductase] + O2 = 8beta-hydroxygermacra-1(10),4,11(13)-trien-12-oate + oxidized [NADPH--hemoprotein reductase] + H2O + H(+). The enzyme catalyses germacra-1(10),4,11(13)-trien-12-oate + reduced [NADPH--hemoprotein reductase] + O2 = 8-epi-inunolide + oxidized [NADPH--hemoprotein reductase] + 2 H2O. It catalyses the reaction germacra-1(10),4,11(13)-trien-12-oate + reduced [NADPH--hemoprotein reductase] + O2 = 8alpha-hydroxygermacra-1(10),4,11(13)-trien-12-oate + oxidized [NADPH--hemoprotein reductase] + H2O + H(+). Its pathway is secondary metabolite biosynthesis; terpenoid biosynthesis. In terms of biological role, involved in the biosynthesis of germacrene-derived sesquiterpene lactones. Hydroxylates germacrene A acid to 8-beta-hydroxy-germacrene A and 8-alpha-hydroxy-germacrene A acids. Unlike 8-alpha-hydroxy-germacrene A acid with is spontaneously converted into inunolide (12, 8-alpha), 8-beta-hydroxy-germacrene A cannot undergo spontaneous lactonization. The polypeptide is Germacrene A acid 8-beta-hydroxylase (Inula hupehensis (Inula helianthus-aquatilis subsp. hupehensis)).